Here is a 160-residue protein sequence, read N- to C-terminus: Major strawberry allergen Fra a 1-B (160 aa).

The protein belongs to the BetVI family. In terms of assembly, monomer.

The sequence is that of Major strawberry allergen Fra a 1-B from Fragaria ananassa (Strawberry).